We begin with the raw amino-acid sequence, 629 residues long: Polyadenylate-binding protein 2 (629 aa).

Residues 1 to 12 are compositionally biased toward polar residues; it reads MAQVQLQGQTPN. Residues 1-25 form a disordered region; it reads MAQVQLQGQTPNGSTAAVTSAPATS. A compositionally biased stretch (low complexity) spans 13–25; that stretch reads GSTAAVTSAPATS. RRM domains lie at 36–114, 124–201, 215–292, and 318–395; these read TSLY…YSHR, GNIF…PFLR, TNVY…RAQK, and SNLY…IAQR. A disordered region spans residues 480 to 507; sequence PQQQRPGGGRRPGGIQHSQQQNPMMQQQ. The span at 492–507 shows a compositional bias: low complexity; that stretch reads GGIQHSQQQNPMMQQQ. Residues 539 to 616 form the PABC domain; that stretch reads TIGALASNLS…AMDVLRSVAA (78 aa).

This sequence belongs to the polyadenylate-binding protein type-1 family. In terms of assembly, interacts with eIF-iso4G. Interacts with ERD15/CID1 and CID7. Interacts with Turnip mosaic virus (TuMV) VPg-Pro and RNA-dependent RNA polymerase (RdRp). Expressed in all organs (at the protein level) but under distinct spatial and temporal regulation within each organ.

Its subcellular location is the cytoplasm. The protein localises to the nucleus. Functionally, binds the poly(A) tail of mRNA. Appears to be an important mediator of the multiple roles of the poly(A) tail in mRNA biogenesis, stability and translation. In the cytoplasm, affects both translation and mRNA decay. Stimulates translation by interaction with translation initiation factor eIF4G, a subunit of the cap-binding complex eIF4F, bringing the 5'- and 3'-ends of the mRNA in proximity. The formation of this circular mRNP structure appears to be critical for the synergistic effects of the cap and the poly(A) tail in facilitating translation initiation, recycling of ribosomes, and mRNA stability. During infection with potyvirus TuMV, acts as a potential integral component of the viral replicase complex that could play an important role in the regulation of potyviral RNA-dependent RNA polymerase (RdRp). Binds to uridylated mRNAs and determines the size of uridine extensions. Limits uridine extension by URT1, likely by binding to the oligo(A) tail and preventing URT1 access. The polypeptide is Polyadenylate-binding protein 2 (PAB2) (Arabidopsis thaliana (Mouse-ear cress)).